The chain runs to 338 residues: MIEIEKVCVDFTAGRGTPTRAVDDVSLHIAAGEIFGIVGTSGAGKSTLLRTLNALTRPSQGRVNVNGVEISALDGKALRQARQRIGMIFQHFNLMHTRTVAKNVAFSLKAAGWERSKIAPRVAEILTLVGLADKANCFPVQLSGGQKQRVGIARAIANHPDVLLCDEPTSALDLETSATILALLRQINAQLGITIVLITHEMNVIKSICDRVAVMSGGKVVESGEVFDVFAHPQHAFTQQLVSHTLNLTLPERLREHLPGQLLKILFIGDSAEQPVLSEVAIKFGVAVNILHGKIEYIGERALGILVVQLTAPHNPTAVAAAVEHIRQRTAQVEVIRG.

One can recognise an ABC transporter domain in the interval 2–242 (IEIEKVCVDF…PQHAFTQQLV (241 aa)). 39–46 (GTSGAGKS) is an ATP binding site.

Belongs to the ABC transporter superfamily. Methionine importer (TC 3.A.1.24) family. As to quaternary structure, the complex is composed of two ATP-binding proteins (MetN), two transmembrane proteins (MetI) and a solute-binding protein (MetQ).

It is found in the cell inner membrane. It catalyses the reaction L-methionine(out) + ATP + H2O = L-methionine(in) + ADP + phosphate + H(+). It carries out the reaction D-methionine(out) + ATP + H2O = D-methionine(in) + ADP + phosphate + H(+). In terms of biological role, part of the ABC transporter complex MetNIQ involved in methionine import. Responsible for energy coupling to the transport system. The polypeptide is Methionine import ATP-binding protein MetN 2 (Salmonella typhi).